The sequence spans 298 residues: ADP/ATP translocase 2 (298 aa).

Methionine 1 is subject to N-acetylmethionine. At 1 to 7 the chain is on the mitochondrial intermembrane side; the sequence is MTDAAVS. Threonine 2 carries the post-translational modification N-acetylthreonine; in ADP/ATP translocase 2, N-terminally processed. The stretch at 6 to 98 is one Solcar 1 repeat; it reads VSFAKDFLAG…FAFKDKYKQI (93 aa). Serine 7 bears the Phosphoserine mark. A helical transmembrane segment spans residues 8–37; the sequence is FAKDFLAGGVAAAISKTAVAPIERVKLLLQ. At lysine 23 the chain carries N6-malonyllysine. Topologically, residues 38 to 74 are mitochondrial matrix; the sequence is VQHASKQITADKQYKGIIDCVVRIPKEQGVLSFWRGN. An N6-succinyllysine modification is found at lysine 43. At lysine 52 the chain carries N6,N6,N6-trimethyllysine; alternate. The residue at position 52 (lysine 52) is an N6,N6-dimethyllysine; alternate. Position 52 is an N6-methyllysine; alternate (lysine 52). A helical membrane pass occupies residues 75–99; sequence LANVIRYFPTQALNFAFKDKYKQIF. 2 residues coordinate ADP: arginine 80 and lysine 92. Residues lysine 92 and lysine 96 each carry the N6-malonyllysine modification. Residues 100-109 lie on the Mitochondrial intermembrane side of the membrane; sequence LGGVDKRTQF. Lysine 105 carries the post-translational modification N6-acetyllysine; alternate. Lysine 105 carries the post-translational modification N6-succinyllysine; alternate. The helical transmembrane segment at 110-130 threads the bilayer; it reads WRYFAGNLASGGAAGATSLCF. 2 Solcar repeats span residues 111 to 201 and 212 to 297; these read RYFA…AKGM and ISWM…IKKY. Residues 131-178 are Mitochondrial matrix-facing; sequence VYPLDFARTRLAADVGKAGAEREFKGLGDCLVKIYKSDGIKGLYQGFN. Residue lysine 147 is modified to N6-methyllysine; alternate. N6-acetyllysine; alternate occurs at positions 147 and 155. Lysine 147 and lysine 155 each carry N6-succinyllysine; alternate. The residue at position 147 (lysine 147) is an N6-malonyllysine; alternate. Residues lysine 163 and lysine 166 each carry the N6-acetyllysine modification. Residues 179–199 traverse the membrane as a helical segment; the sequence is VSVQGIIIYRAAYFGIYDTAK. The Mitochondrial intermembrane portion of the chain corresponds to 200-210; it reads GMLPDPKNTHI. The helical transmembrane segment at 211–231 threads the bilayer; the sequence is FISWMIAQSVTAVAGLTSYPF. Residues 232–273 are Mitochondrial matrix-facing; it reads DTVRRRMMMQSGRKGTDIMYTGTLDCWRKIARDEGGKAFFKG. Arginine 235 contributes to the ADP binding site. The tract at residues 235–240 is important for transport activity; the sequence is RRRMMM. The short motif at 235-240 is the Nucleotide carrier signature motif element; it reads RRRMMM. At lysine 268 the chain carries N6-acetyllysine; alternate. Lysine 268 is subject to N6-succinyllysine; alternate. The helical transmembrane segment at 274–291 threads the bilayer; that stretch reads AWSNVLRGMGGAFVLVLY. The Mitochondrial intermembrane portion of the chain corresponds to 292–298; the sequence is DEIKKYT.

This sequence belongs to the mitochondrial carrier (TC 2.A.29) family. Monomer. Component of the MMXD complex, which includes CIAO1, ERCC2, CIAO2B, MMS19 and SLC25A5/ANT2. Interacts with AK4. Interacts with TIMM44; leading to inhibit the presequence translocase TIMM23, thereby promoting stabilization of PINK1. Post-translationally, trimethylated by ANTKMT at Lys-52. In terms of tissue distribution, present in kidney, brain, heart, liver and skeletal muscle.

The protein localises to the mitochondrion inner membrane. It is found in the membrane. It carries out the reaction ADP(in) + ATP(out) = ADP(out) + ATP(in). The catalysed reaction is H(+)(in) = H(+)(out). The matrix-open state (m-state) is inhibited by the membrane-permeable bongkrekic acid (BKA). The cytoplasmic-open state (c-state) is inhibited by the membrane-impermeable toxic inhibitor carboxyatractyloside (CATR). Proton transporter activity is inhibited by ADP:ATP antiporter activity. In terms of biological role, ADP:ATP antiporter that mediates import of ADP into the mitochondrial matrix for ATP synthesis, and export of ATP out to fuel the cell. Cycles between the cytoplasmic-open state (c-state) and the matrix-open state (m-state): operates by the alternating access mechanism with a single substrate-binding site intermittently exposed to either the cytosolic (c-state) or matrix (m-state) side of the inner mitochondrial membrane. In addition to its ADP:ATP antiporter activity, also involved in mitochondrial uncoupling and mitochondrial permeability transition pore (mPTP) activity. Plays a role in mitochondrial uncoupling by acting as a proton transporter: proton transport uncouples the proton flows via the electron transport chain and ATP synthase to reduce the efficiency of ATP production and cause mitochondrial thermogenesis. Proton transporter activity is inhibited by ADP:ATP antiporter activity, suggesting that SLC25A5/ANT2 acts as a master regulator of mitochondrial energy output by maintaining a delicate balance between ATP production (ADP:ATP antiporter activity) and thermogenesis (proton transporter activity). Proton transporter activity requires free fatty acids as cofactor, but does not transport it. Probably mediates mitochondrial uncoupling in tissues that do not express UCP1. Also plays a key role in mPTP opening, a non-specific pore that enables free passage of the mitochondrial membranes to solutes of up to 1.5 kDa, and which contributes to cell death. It is however unclear if SLC25A5/ANT2 constitutes a pore-forming component of mPTP or regulates it. Acts as a regulator of mitophagy independently of ADP:ATP antiporter activity: promotes mitophagy via interaction with TIMM44, leading to inhibit the presequence translocase TIMM23, thereby promoting stabilization of PINK1. As part of the mitotic spindle-associated MMXD complex it may play a role in chromosome segregation. This chain is ADP/ATP translocase 2, found in Rattus norvegicus (Rat).